We begin with the raw amino-acid sequence, 144 residues long: 3-hydroxyacyl-[acyl-carrier-protein] dehydratase FabZ (144 aa).

Histidine 48 is a catalytic residue.

This sequence belongs to the thioester dehydratase family. FabZ subfamily.

The protein localises to the cytoplasm. The enzyme catalyses a (3R)-hydroxyacyl-[ACP] = a (2E)-enoyl-[ACP] + H2O. In terms of biological role, involved in unsaturated fatty acids biosynthesis. Catalyzes the dehydration of short chain beta-hydroxyacyl-ACPs and long chain saturated and unsaturated beta-hydroxyacyl-ACPs. This Listeria welshimeri serovar 6b (strain ATCC 35897 / DSM 20650 / CCUG 15529 / CIP 8149 / NCTC 11857 / SLCC 5334 / V8) protein is 3-hydroxyacyl-[acyl-carrier-protein] dehydratase FabZ.